Consider the following 311-residue polypeptide: tRNA-cytidine(32) 2-sulfurtransferase (311 aa).

Residues 47 to 52 (SGGKDS) carry the PP-loop motif motif. [4Fe-4S] cluster contacts are provided by Cys122, Cys125, and Cys213.

The protein belongs to the TtcA family. As to quaternary structure, homodimer. Mg(2+) serves as cofactor. [4Fe-4S] cluster is required as a cofactor.

Its subcellular location is the cytoplasm. It catalyses the reaction cytidine(32) in tRNA + S-sulfanyl-L-cysteinyl-[cysteine desulfurase] + AH2 + ATP = 2-thiocytidine(32) in tRNA + L-cysteinyl-[cysteine desulfurase] + A + AMP + diphosphate + H(+). Its pathway is tRNA modification. Catalyzes the ATP-dependent 2-thiolation of cytidine in position 32 of tRNA, to form 2-thiocytidine (s(2)C32). The sulfur atoms are provided by the cysteine/cysteine desulfurase (IscS) system. This is tRNA-cytidine(32) 2-sulfurtransferase from Escherichia coli O127:H6 (strain E2348/69 / EPEC).